The primary structure comprises 3096 residues: MGRNQRKAPQRLERPGRPASGEQESGSASADGAPSRERRSDRGQADRAKPAAEPATAGGQGTPGGRRKPTAEGNGGCRRPGAGLSPKAQERQSNAQRQGRGPRGGRGGRLEEGSLSGGEELGGRRRRKRKDKGPSARRGRRTPRSLNGDTSGGDGGSSCPDSETREAQESGSQRGTARELRPTPEPTDMGSEGTKTGPESALEPSSDGLDSDWPHADTRGREGSSGTGPLGASEHSGGDSDSSPLGTGPGRGSRAAMASRTFEDSSRAPRDTGPAKDASDNRAQRGAEPETMQASTARAPRHQVGKAVGQVPAAAGEGEAGAAAGAGPEDPAPLAALLVVRRLLARPPPGAASQAVGPRRAGLKERLLSVARALGLLRWLRRRLRLRRRPPEGEGQGTGPRASEGWGRRKPDEGRGHGRGSKGRGRGKADEGRGHERGDEGRGRGKADEGRGHERGYEGRGCGKADEGRGHERGDEGRDHQRGYEGWGREPGLRHRLALRLAGLAGLGGMPRASPGGRSPQVPTSPVPGDPFDQEDETPDPKFAVVFPRIHRAGRASSSRSSEEASADAPTGEGRGWPRAGVGGHSEGCRTSGEGVSGLRRGSLLAPTAPDGPSLDESGSSSEAELETLNDEPPVRWAQGSGPHEGPRLGAAVLLPRLSLETRLQQEGDPGLRGSLRELWEPEDEDEAVLERDLELSLRPGLEAPPFPGAKGRSLGDGLEDMEDLARLRLVCDSSVLLCLKKRFHLGRIYTFGGPVLLVLNPHRSLPLFSPEVQASYHPRKALSTTPHIFAIVASAYDLAQNTGQDPCILLCSSHCSGHSGSGKTEAAKKIMQFLSSLEQDQTGNRECQVEDMLPILSSFGHAKTILNANASRFGQVFCLYLQQGVIVGASVSHYLLETSRVVFQAQAERSFHVFYKLLAGLDSIERERLSLQGPETYYYLNQGQACRLQGKEDAQDFEGLLKALQGLGLCPEELNAVWAVLAAILQLGNICFSSSERESQEVAAVSSWAEIHTAARLLRVPPECLEGAVTRRVTETPYGQVSRSLPVESAFDARDALAKALYSRLFHRLLRRTNARLAPPGEGGSIGTVTVVDAYGFEALRVNGLEQLCNNLASERLQLFSSQMLLAQEEEECRRELLSWVPVPQPPRESCLDLLVDQPHSLLSILDAQTWLSQATDHTFLQKSHYHHGDHPSYAKPRLPLPVFTVRHYAGTVTYQVHKFLNRNRDQLDPAVVEMLGQSQLQLVGSLFQEAEPQSRGGRGRPTLASRFQQALEDLIARLGRSHVYFIQCLTPNPGKLPGLFDVGHVTEQLHQAAILEAVGTRSANFPVRVPFEAFLASFQALGSEGQEDLSDREKCGAVLSQVLGAESPLYHLGATKVLLQEQGWQRLEELRDQQRSQALVDLHRSFHTCISRQRVLPRMQARMRGFQARKRYLRRRAALGQLNTILLVAQPLLQRRQRLQLGRWQGWHSSERALERVPSMELGRLEIPAELAVMLKTAESHRDALAGSITECLPPEVPARPSLTLPADIDLFPFSSFVAIGFQEPSLPRPGQPLAKPLTQLDGDNPQRALDINKVMLRLLGDGSLESWQRQIMGAYLVRQGQCRPGLRNELFSQLVAQLWQNPDEQQSQRGWALMAVLLSAFPPLPVLQKPLLKFVSDQAPRGMAALCQHKLLGALEQSQLASGATRAHPPTQLEWLAGWRRGRMALDVFTFSEECYSAEVESWTTGEQLAGWILQSRGLEAPPRGWSVSLHSRDAWQDLAGCDFVLDLISQTEDLGDPARPRSYPITPLGSAEAIPLAPGIQAPSLPPGPPPGPAPTLPSRDHTGEVQRSGSLDGFLDQIFQPVISSGLSDLEQSWALSSRMKGGGAIGPTQQGYPMVYPGMIQMPAYQPGMVPAPMPMMPAMGTVPAMPAMVVPPQPPLPSLDAGQLAVQQQNFIQQQALILAQQMTAQAMSLSLEQQMQQRQQQARASEAASQASPSAVTSKPRKPPTPPEKPQRDLGSEGGCLRETSEEAEDRPYQPKSFQQKRNYFQRMGQPQITVRTMKPPAKVHIPQGEAQEEEEEEEEEEEQEEQEVETRAVPSPPPPPIVKKPLKQGGAKAPKEAEAEPAKETAAKGHGQGPAQGRGTVVRSSDSKPKRPQPSREIGNIIRMYQSRPGPVPVPVQPSRPPKAFLRKIDPKDEALAKLGINGAHSSPPMLSPSPGKGPPPAVAPRPKAPLQLGPSSSIKEKQGPLLDLFGQKLPIAHTPPPPPAPPLPLPEDPGTLSAERRCLTQPVEDQGVSTQLLAPSGSVCFSYTGTPWKLFLRKEVFYPRENFSHPYYLRLLCEQILRDTFSESCIRISQNERRKMKDLLGGLEVDLDSLTTTEDSVKKRIVVAARDNWANYFSRFFPVSGESGSDVQLLAVSHRGLRLLKVTQGPGLRPDQLKILCSYSFAEVLGVECRGGSTLELSLKSEQLVLHTARARAIEALVELFLNELKKDSGYVIALRSYITDNCSLLSFHRGDLIKLLPVATLEPGWQFGSAGGRSGLFPADIVQPAAAPDFSFSKEQRSGWHKGQLSNGEPGLARWDRASERPAHPWSQAHSDDSEATSLSSVAYAFLPDSHSYTMQEFARRYFRRSQALLGQTDGGAAGKDTDSLVQYTKAPIQESLLSLSDDVSKLAVASFLALMRFMGDQSKPRGKDEMDLLYELLKLCQQEKLRDEIYCQVIKQVTGHPRPEHCTRGWSFLSLLTGFFPPSTRLMPYLTKFLQDSGPSQELARSSQEHLQRTVKYGGRRRMPPPGEMKAFLKGQAIRLLLIHLPGGVDYRTNIQTFTVAAEVQEELCRQMGITEPQEVQEFALFLIKEKSQLVRPLQPAEYLNSVVVDQDVSLHSRRLHWETPLHFDNSTYISTHYSQVLWDYLQGKLPVSAKADAQLARLAALQHLSKANRNTPSGQDLLAYVPKQLQRQVNTASIKNLMGQELRRLEGHSPQEAQISFIEAMSQLPLFGYTVYGVLRVSMQALSGPTLLGLNRQHLILMDPSSQSLYCRIALKSLQRLHLLSPLEEKGPPGLEVNYGSADNPQTIWFELPQAQELLYTTVFLIDSSASCTEWPSIN.

4 disordered regions span residues 1–330 (MGRN…GPED), 389–489 (RPPE…GWGR), 508–540 (GGMP…ETPD), and 553–649 (AGRA…GPRL). Positions 19–33 (ASGEQESGSASADGA) are enriched in low complexity. Residues 34 to 50 (PSRERRSDRGQADRAKP) show a composition bias toward basic and acidic residues. Residues 124 to 143 (RRRRKRKDKGPSARRGRRTP) are compositionally biased toward basic residues. Basic and acidic residues-rich tracts occupy residues 212 to 222 (DWPHADTRGRE) and 261 to 288 (TFED…RGAE). Over residues 307-330 (AVGQVPAAAGEGEAGAAAGAGPED) the composition is skewed to low complexity. The segment covering 406–416 (WGRRKPDEGRG) has biased composition (basic and acidic residues). Residues 417–426 (HGRGSKGRGR) show a composition bias toward basic residues. The span at 427–489 (GKADEGRGHE…HQRGYEGWGR (63 aa)) shows a compositional bias: basic and acidic residues. The 675-residue stretch at 720–1394 (EDMEDLARLR…GWQRLEELRD (675 aa)) folds into the Myosin motor domain. 818–825 (GHSGSGKT) serves as a coordination point for ATP. The interval 1273–1295 (LEDLIARLGRSHVYFIQCLTPNP) is actin-binding. Positions 1414–1443 (RQRVLPRMQARMRGFQARKRYLRRRAALGQ) constitute an IQ domain. Residues 1551–1702 (RPGQPLAKPL…PTQLEWLAGW (152 aa)) enclose the MyTH4 1 domain. Disordered regions lie at residues 1802 to 1833 (PGIQ…VQRS), 1963 to 2026 (MQQR…PKSF), and 2040 to 2262 (QITV…LPED). The span at 1808–1820 (SLPPGPPPGPAPT) shows a compositional bias: pro residues. The span at 1963-1980 (MQQRQQQARASEAASQAS) shows a compositional bias: low complexity. Residues 2059–2076 (AQEEEEEEEEEEEQEEQE) are compositionally biased toward acidic residues. The span at 2102 to 2116 (APKEAEAEPAKETAA) shows a compositional bias: basic and acidic residues. The span at 2159–2170 (GPVPVPVQPSRP) shows a compositional bias: pro residues. The span at 2176–2185 (RKIDPKDEAL) shows a compositional bias: basic and acidic residues. Pro residues-rich tracts occupy residues 2199-2217 (MLSP…PRPK) and 2247-2261 (HTPP…PLPE). The SH3 domain occupies 2481–2542 (KDSGYVIALR…PADIVQPAAA (62 aa)). The tract at residues 2548-2567 (SKEQRSGWHKGQLSNGEPGL) is disordered. A MyTH4 2 domain is found at 2643 to 2789 (YTKAPIQESL…PPPGEMKAFL (147 aa)). The region spanning 2795–3096 (RLLLIHLPGG…ASCTEWPSIN (302 aa)) is the FERM domain.

The protein belongs to the TRAFAC class myosin-kinesin ATPase superfamily. Myosin family. Detected in brain, stomach and kidney.

It localises to the cytoplasm. The polypeptide is Unconventional myosin-XVB (Homo sapiens (Human)).